We begin with the raw amino-acid sequence, 335 residues long: Lipoyl synthase (335 aa).

The [4Fe-4S] cluster site is built by Cys55, Cys60, Cys66, Cys81, Cys85, Cys88, and Ser292. The Radical SAM core domain maps to 67-281; the sequence is WEDREATFLI…SKAAEEIGFL (215 aa).

It belongs to the radical SAM superfamily. Lipoyl synthase family. [4Fe-4S] cluster serves as cofactor.

Its subcellular location is the cytoplasm. It catalyses the reaction [[Fe-S] cluster scaffold protein carrying a second [4Fe-4S](2+) cluster] + N(6)-octanoyl-L-lysyl-[protein] + 2 oxidized [2Fe-2S]-[ferredoxin] + 2 S-adenosyl-L-methionine + 4 H(+) = [[Fe-S] cluster scaffold protein] + N(6)-[(R)-dihydrolipoyl]-L-lysyl-[protein] + 4 Fe(3+) + 2 hydrogen sulfide + 2 5'-deoxyadenosine + 2 L-methionine + 2 reduced [2Fe-2S]-[ferredoxin]. It participates in protein modification; protein lipoylation via endogenous pathway; protein N(6)-(lipoyl)lysine from octanoyl-[acyl-carrier-protein]: step 2/2. Its function is as follows. Catalyzes the radical-mediated insertion of two sulfur atoms into the C-6 and C-8 positions of the octanoyl moiety bound to the lipoyl domains of lipoate-dependent enzymes, thereby converting the octanoylated domains into lipoylated derivatives. In Kocuria rhizophila (strain ATCC 9341 / DSM 348 / NBRC 103217 / DC2201), this protein is Lipoyl synthase.